The primary structure comprises 220 residues: UPF0319 protein Asuc_1002 (220 aa).

Residues 1–21 (MKFRLAAVAAAALLASSASFA) form the signal peptide.

This sequence belongs to the UPF0319 family.

The chain is UPF0319 protein Asuc_1002 from Actinobacillus succinogenes (strain ATCC 55618 / DSM 22257 / CCUG 43843 / 130Z).